A 342-amino-acid chain; its full sequence is Oxygen-dependent coproporphyrinogen-III oxidase (342 aa).

Residue serine 98 participates in substrate binding. A divalent metal cation contacts are provided by histidine 102 and histidine 112. Histidine 112 serves as the catalytic Proton donor. A substrate-binding site is contributed by 114 to 116 (NYR). A divalent metal cation is bound by residues histidine 146 and histidine 176. The tract at residues 266–301 (YVEFNLVWDRGTIFGLQTNGRTESILMSLPPLARWE) is important for dimerization.

The protein belongs to the aerobic coproporphyrinogen-III oxidase family. As to quaternary structure, homodimer. The cofactor is a divalent metal cation.

Its subcellular location is the cytoplasm. The catalysed reaction is coproporphyrinogen III + O2 + 2 H(+) = protoporphyrinogen IX + 2 CO2 + 2 H2O. The protein operates within porphyrin-containing compound metabolism; protoporphyrin-IX biosynthesis; protoporphyrinogen-IX from coproporphyrinogen-III (O2 route): step 1/1. Involved in the heme and chlorophyll biosynthesis. Catalyzes the aerobic oxidative decarboxylation of propionate groups of rings A and B of coproporphyrinogen-III to yield the vinyl groups in protoporphyrinogen-IX. This is Oxygen-dependent coproporphyrinogen-III oxidase from Prochlorococcus marinus (strain AS9601).